Reading from the N-terminus, the 200-residue chain is Large ribosomal subunit protein uL4 (200 aa).

The segment at 42–69 is disordered; the sequence is SKAQKNRSDVSGGGRKPWRQKGTGRARA.

It belongs to the universal ribosomal protein uL4 family. As to quaternary structure, part of the 50S ribosomal subunit.

One of the primary rRNA binding proteins, this protein initially binds near the 5'-end of the 23S rRNA. It is important during the early stages of 50S assembly. It makes multiple contacts with different domains of the 23S rRNA in the assembled 50S subunit and ribosome. Functionally, forms part of the polypeptide exit tunnel. The polypeptide is Large ribosomal subunit protein uL4 (Alcanivorax borkumensis (strain ATCC 700651 / DSM 11573 / NCIMB 13689 / SK2)).